The sequence spans 591 residues: ESX-1 secretion system protein EccCb1 (591 aa).

FtsK domains follow at residues 65-259 (LQDV…NETQ) and 359-545 (LTPA…EKQE). ATP contacts are provided by residues 84–91 (GAPQTGKS) and 376–383 (GAAKSGKT).

As to quaternary structure, part of the ESX-1 / type VII secretion system (T7SS), which is composed of cytosolic and membrane components. The ESX-1 membrane complex is composed of EccB1, EccCa1, EccCb1, EccD1 and EccE1. Interacts with EccCa1, EspK and the C-terminus of EsxB. Residues 1-261 interact with EsxB and an artificial EsxB-EsxA heterodimer.

The protein resides in the cytoplasm. With respect to regulation, esxB binding to the second FtsK domain of EccCb1 causes multimerization; a subsequent unknown step relieves the allosteric inhibition of linker 2 on FtsK domain 1 (in EccCa1 subunit), activating the ATPase activity. Functionally, part of the ESX-1 specialized secretion system, which delivers several virulence factors to host cells during infection, including the key virulence factors EsxA (ESAT-6) and EsxB (CFP-10). EccCb1 may link the cytosolic components of the system with the membrane components. The sequence is that of ESX-1 secretion system protein EccCb1 from Mycobacterium tuberculosis (strain ATCC 25618 / H37Rv).